Here is a 360-residue protein sequence, read N- to C-terminus: 3-dehydroquinate synthase (360 aa).

Residues 71-76, 105-109, 129-130, Lys-142, Lys-151, and 169-172 contribute to the NAD(+) site; these read DGEQYK, GVVGD, TT, and TLNT. Residues Glu-184, His-248, and His-265 each coordinate Zn(2+).

This sequence belongs to the sugar phosphate cyclases superfamily. Dehydroquinate synthase family. Requires Co(2+) as cofactor. Zn(2+) serves as cofactor. The cofactor is NAD(+).

The protein resides in the cytoplasm. The enzyme catalyses 7-phospho-2-dehydro-3-deoxy-D-arabino-heptonate = 3-dehydroquinate + phosphate. The protein operates within metabolic intermediate biosynthesis; chorismate biosynthesis; chorismate from D-erythrose 4-phosphate and phosphoenolpyruvate: step 2/7. In terms of biological role, catalyzes the conversion of 3-deoxy-D-arabino-heptulosonate 7-phosphate (DAHP) to dehydroquinate (DHQ). The polypeptide is 3-dehydroquinate synthase (Coxiella burnetii (strain RSA 331 / Henzerling II)).